We begin with the raw amino-acid sequence, 208 residues long: Probable GTP-binding protein EngB (208 aa).

An EngB-type G domain is found at 18 to 187 (KQFEICVIGR…FALMKKVVIE (170 aa)). GTP is bound by residues 26–33 (GRSNVGKS), 52–56 (GRTQL), 69–72 (DLPG), 135–138 (NKVD), and 166–168 (VSA). Ser-33 and Thr-54 together coordinate Mg(2+).

This sequence belongs to the TRAFAC class TrmE-Era-EngA-EngB-Septin-like GTPase superfamily. EngB GTPase family. Mg(2+) serves as cofactor.

Its function is as follows. Necessary for normal cell division and for the maintenance of normal septation. This Ureaplasma urealyticum serovar 10 (strain ATCC 33699 / Western) protein is Probable GTP-binding protein EngB.